The chain runs to 314 residues: Testisin (314 aa).

Positions 1 to 19 (MGARGALLLALLLARAGLR) are cleaved as a signal peptide. Positions 20–41 (KPESQEAAPLSGPCGRRVITSR) are excised as a propeptide. 2 cysteine pairs are disulfide-bonded: Cys-33-Cys-157 and Cys-67-Cys-83. Residues 42–286 (IVGGEDAELG…HFEWIQKLMA (245 aa)) enclose the Peptidase S1 domain. Residues His-82 and Asp-137 each act as charge relay system in the active site. N-linked (GlcNAc...) asparagine glycans are attached at residues Asn-167 and Asn-200. 3 disulfides stabilise this stretch: Cys-171-Cys-244, Cys-204-Cys-223, and Cys-234-Cys-262. The active-site Charge relay system is the Ser-238. An N-linked (GlcNAc...) asparagine glycan is attached at Asn-273. The GPI-anchor amidated serine moiety is linked to residue Ser-288. Positions 289–314 (GMSQPDPSWPLLFFPLLWALPLLGPV) are cleaved as a propeptide — removed in mature form.

The protein belongs to the peptidase S1 family. As to expression, expressed predominantly in premeiotic testicular germ cells, mostly late pachytene and diplotene spermatocytes.

The protein localises to the cell membrane. In terms of biological role, could regulate proteolytic events associated with testicular germ cell maturation. This chain is Testisin (PRSS21), found in Homo sapiens (Human).